The chain runs to 83 residues: Small ribosomal subunit protein bS20 (83 aa).

Belongs to the bacterial ribosomal protein bS20 family.

Binds directly to 16S ribosomal RNA. The protein is Small ribosomal subunit protein bS20 of Staphylococcus carnosus (strain TM300).